A 130-amino-acid polypeptide reads, in one-letter code: uncharacterized protein (130 aa).

The first 20 residues, 1 to 20 (MFNCLTKLVILVCLKYVAKA), serve as a signal peptide directing secretion.

This is an uncharacterized protein from Saccharomyces cerevisiae (strain ATCC 204508 / S288c) (Baker's yeast).